Consider the following 275-residue polypeptide: Pyridoxal phosphate homeostasis protein (275 aa).

Serine 6 carries the phosphoserine modification. Lysine 47 carries the N6-(pyridoxal phosphate)lysine modification. Residue tyrosine 69 is modified to Phosphotyrosine. Lysine 125 is subject to N6-succinyllysine. A phosphoserine mark is found at serine 226 and serine 244. The segment covering 251–263 (DYSKKPTPDKCAA) has biased composition (basic and acidic residues). Residues 251-275 (DYSKKPTPDKCAADVKAPLEVAQEH) are disordered.

The protein belongs to the pyridoxal phosphate-binding protein YggS/PROSC family. In terms of tissue distribution, ubiquitous.

Pyridoxal 5'-phosphate (PLP)-binding protein, which may be involved in intracellular homeostatic regulation of pyridoxal 5'-phosphate (PLP), the active form of vitamin B6. This Homo sapiens (Human) protein is Pyridoxal phosphate homeostasis protein.